A 327-amino-acid chain; its full sequence is MAAYDSLMVFTGTANPELAQNVVKHLDISLGRADVGKFSDGEVAVELLENVRGRDVFILQSTCAPTNDNLMEILTMADALKRASAGRITAAIPYFGYARQDRRPRSARVPISAKLVANMLTSAGIDRVLTVDLHADQIQGFFDIPVDNVYATPVLLKDIRAQRFDDLIVVSPDVGGVVRARAVAKALNTDLAIIDKRRPKANVAEVMNIIGDVSGRTCLIVDDMIDTANTLCKAASALKERGAERVLAYATHAIFSGQAVDRIKNSDIDMVVVTDTIPLTAAAKACPNIRVASIAGLLAETLRRINNEESVSYLFNEELVATGACLP.

ATP contacts are provided by residues 40–42 and 99–100; these read DGE and RQ. Mg(2+) is bound by residues H134 and D173. The active site involves K196. D-ribose 5-phosphate-binding positions include R198, D222, and 226 to 230; that span reads DTANT.

The protein belongs to the ribose-phosphate pyrophosphokinase family. Class I subfamily. In terms of assembly, homohexamer. Requires Mg(2+) as cofactor.

The protein resides in the cytoplasm. It carries out the reaction D-ribose 5-phosphate + ATP = 5-phospho-alpha-D-ribose 1-diphosphate + AMP + H(+). It participates in metabolic intermediate biosynthesis; 5-phospho-alpha-D-ribose 1-diphosphate biosynthesis; 5-phospho-alpha-D-ribose 1-diphosphate from D-ribose 5-phosphate (route I): step 1/1. Involved in the biosynthesis of the central metabolite phospho-alpha-D-ribosyl-1-pyrophosphate (PRPP) via the transfer of pyrophosphoryl group from ATP to 1-hydroxyl of ribose-5-phosphate (Rib-5-P). This chain is Ribose-phosphate pyrophosphokinase, found in Chromobacterium violaceum (strain ATCC 12472 / DSM 30191 / JCM 1249 / CCUG 213 / NBRC 12614 / NCIMB 9131 / NCTC 9757 / MK).